Here is a 280-residue protein sequence, read N- to C-terminus: Meiotic spindle formation protein 2 (280 aa).

Residues 1–104 (MSGLDDRKKL…LPKSSPESSV (104 aa)) form a disordered region. The span at 72–92 (LHSESKKELSRNPVSRGEEHS) shows a compositional bias: basic and acidic residues. Low complexity predominate over residues 93–104 (SSLPKSSPESSV).

In terms of assembly, interacts with mei-1.

The protein resides in the cytoplasm. It localises to the cytoskeleton. The protein localises to the spindle pole. Its function is as follows. Forms a heterodimeric complex in conjunction with mei-1 which severs microtubules in vitro in an ATP-dependent manner. This activity may promote rapid reorganization of cellular microtubule arrays. May act to target mei-1 within the cell. Required specifically for meiotic spindle formation in the female germline. The protein is Meiotic spindle formation protein 2 (mei-2) of Caenorhabditis elegans.